The following is a 129-amino-acid chain: Small ribosomal subunit protein uS12 (129 aa).

Position 89 is a 3-methylthioaspartic acid (Asp-89). Residues 101–129 form a disordered region; that stretch reads TLDTSGVSDRKQSRSKYGAKQPKAVAAKK.

This sequence belongs to the universal ribosomal protein uS12 family. Part of the 30S ribosomal subunit. Contacts proteins S8 and S17. May interact with IF1 in the 30S initiation complex.

In terms of biological role, with S4 and S5 plays an important role in translational accuracy. Interacts with and stabilizes bases of the 16S rRNA that are involved in tRNA selection in the A site and with the mRNA backbone. Located at the interface of the 30S and 50S subunits, it traverses the body of the 30S subunit contacting proteins on the other side and probably holding the rRNA structure together. The combined cluster of proteins S8, S12 and S17 appears to hold together the shoulder and platform of the 30S subunit. In Chlorobium luteolum (strain DSM 273 / BCRC 81028 / 2530) (Pelodictyon luteolum), this protein is Small ribosomal subunit protein uS12.